Consider the following 195-residue polypeptide: Interferon omega-1 (195 aa).

The signal sequence occupies residues 1–23; that stretch reads MAFVLSLLMALVLVSYGPGGSLG. Intrachain disulfides connect Cys24–Cys122 and Cys52–Cys162.

Belongs to the alpha/beta interferon family.

It is found in the secreted. This Bos taurus (Bovine) protein is Interferon omega-1 (IFNW1).